A 300-amino-acid chain; its full sequence is MKKVCFSFVIMVIALIAAGCGAEDTGTSEDGEGLKIVTSFSILGDVLENIAGERSSVTYIVPIGEEPHEYEPVPSDFQAVSDADVFYVNGLGLEEWLQRLVENTSDVDVVEVSPTIDALPLEESDGLDPHAWLDVKNVMKYVEVIRDDLVERDPDGAEIYVANAEAYLQDLQELEEWIHDQVTTIPEEQRTIVISENAYRYFGEAYGFDTVGIWELNSHEEGTPGQISRVVDIVKELDLPAVFVETTVNKSFMTTVSNDSGVDIAGEVYTDAVGLEGSGAETYIDMMKHNVDTFVSGLSQ.

An N-terminal signal peptide occupies residues 1-19 (MKKVCFSFVIMVIALIAAG). A lipid anchor (N-palmitoyl cysteine) is attached at C20. C20 is lipidated: S-diacylglycerol cysteine. Mn(2+) contacts are provided by H68, H130, E196, and D271.

It belongs to the bacterial solute-binding protein 9 family.

The protein localises to the cell membrane. Probably part of ATP-binding cassette (ABC) transport system MntABCD involved in manganese import. Binds manganese and delivers it to the membrane permease for translocation into the cytoplasm. The protein is Manganese-binding lipoprotein MntA (mntA) of Halalkalibacterium halodurans (strain ATCC BAA-125 / DSM 18197 / FERM 7344 / JCM 9153 / C-125) (Bacillus halodurans).